The sequence spans 434 residues: Ribosomal protein uS12 methylthiotransferase RimO (434 aa).

The 111-residue stretch at 2-112 (AKIGFVSLGC…VLEAVQVVLP (111 aa)) folds into the MTTase N-terminal domain. [4Fe-4S] cluster is bound by residues Cys11, Cys47, Cys76, Cys142, Cys146, and Cys149. The region spanning 128-365 (LTPRHYAYVK…LELQARVSLR (238 aa)) is the Radical SAM core domain. The region spanning 368–434 (QRFVGKTLEV…DTYDLHGVQA (67 aa)) is the TRAM domain.

The protein belongs to the methylthiotransferase family. RimO subfamily. The cofactor is [4Fe-4S] cluster.

Its subcellular location is the cytoplasm. It carries out the reaction L-aspartate(89)-[ribosomal protein uS12]-hydrogen + (sulfur carrier)-SH + AH2 + 2 S-adenosyl-L-methionine = 3-methylsulfanyl-L-aspartate(89)-[ribosomal protein uS12]-hydrogen + (sulfur carrier)-H + 5'-deoxyadenosine + L-methionine + A + S-adenosyl-L-homocysteine + 2 H(+). Catalyzes the methylthiolation of an aspartic acid residue of ribosomal protein uS12. The chain is Ribosomal protein uS12 methylthiotransferase RimO from Thermus thermophilus (strain ATCC 27634 / DSM 579 / HB8).